Consider the following 559-residue polypeptide: Dihydroxy-acid dehydratase (559 aa).

C49 is a binding site for [2Fe-2S] cluster. A Mg(2+)-binding site is contributed by D81. C122 serves as a coordination point for [2Fe-2S] cluster. D123 and K124 together coordinate Mg(2+). Residue K124 is modified to N6-carboxylysine. Residue C194 participates in [2Fe-2S] cluster binding. E446 serves as a coordination point for Mg(2+). The active-site Proton acceptor is the S472.

Belongs to the IlvD/Edd family. As to quaternary structure, homodimer. The cofactor is [2Fe-2S] cluster. Requires Mg(2+) as cofactor.

It catalyses the reaction (2R)-2,3-dihydroxy-3-methylbutanoate = 3-methyl-2-oxobutanoate + H2O. The catalysed reaction is (2R,3R)-2,3-dihydroxy-3-methylpentanoate = (S)-3-methyl-2-oxopentanoate + H2O. It participates in amino-acid biosynthesis; L-isoleucine biosynthesis; L-isoleucine from 2-oxobutanoate: step 3/4. Its pathway is amino-acid biosynthesis; L-valine biosynthesis; L-valine from pyruvate: step 3/4. Functionally, functions in the biosynthesis of branched-chain amino acids. Catalyzes the dehydration of (2R,3R)-2,3-dihydroxy-3-methylpentanoate (2,3-dihydroxy-3-methylvalerate) into 2-oxo-3-methylpentanoate (2-oxo-3-methylvalerate) and of (2R)-2,3-dihydroxy-3-methylbutanoate (2,3-dihydroxyisovalerate) into 2-oxo-3-methylbutanoate (2-oxoisovalerate), the penultimate precursor to L-isoleucine and L-valine, respectively. The sequence is that of Dihydroxy-acid dehydratase from Prochlorococcus marinus subsp. pastoris (strain CCMP1986 / NIES-2087 / MED4).